We begin with the raw amino-acid sequence, 254 residues long: 2-dehydro-3-deoxy-D-gluconate 5-dehydrogenase (254 aa).

Residue 16–40 (LVTGPGTGIGQGIAKALAGAGADII) coordinates NAD(+). A substrate-binding site is contributed by serine 146. The active-site Proton acceptor is tyrosine 159.

The protein belongs to the short-chain dehydrogenases/reductases (SDR) family.

The enzyme catalyses 2-dehydro-3-deoxy-D-gluconate + NAD(+) = 3-deoxy-D-glycero-2,5-hexodiulosonate + NADH + H(+). It participates in glycan metabolism; pectin degradation; 2-dehydro-3-deoxy-D-gluconate from pectin: step 5/5. Its function is as follows. Catalyzes the reduction of 2,5-diketo-3-deoxygluconate (DKII or 4,6-dihydroxy-2,5-dioxohexanoate) into 2-keto-3-deoxygluconate (KDG or 2-dehydro-3-deoxygluconate) with a concomitant oxidation of NADH. This chain is 2-dehydro-3-deoxy-D-gluconate 5-dehydrogenase (kduD), found in Bacillus subtilis (strain 168).